The primary structure comprises 168 residues: GTP-dependent dephospho-CoA kinase (168 aa).

GTP-binding residues include aspartate 49, valine 50, valine 51, aspartate 68, lysine 70, and glutamate 120.

It belongs to the GTP-dependent DPCK family.

It carries out the reaction 3'-dephospho-CoA + GTP = GDP + CoA + H(+). The protein operates within cofactor biosynthesis; coenzyme A biosynthesis. Functionally, catalyzes the GTP-dependent phosphorylation of the 3'-hydroxyl group of dephosphocoenzyme A to form coenzyme A (CoA). The chain is GTP-dependent dephospho-CoA kinase from Pyrobaculum calidifontis (strain DSM 21063 / JCM 11548 / VA1).